The sequence spans 877 residues: Neurotrypsin (877 aa).

The N-terminal stretch at 1-20 is a signal peptide; it reads MTLARFVLALVLGALPEVVS. Asparagine 26 carries N-linked (GlcNAc...) asparagine glycosylation. The disordered stretch occupies residues 31–90; that stretch reads HRHRHRHSPPPGLQYPYYLPTQQRPPRTRPPPPLPRFPRPPRALPAQRPHALQAGHTPRP. Positions 44 to 55 are enriched in low complexity; that stretch reads QYPYYLPTQQRP. Positions 58 to 73 are enriched in pro residues; that stretch reads TRPPPPLPRFPRPPRA. The Kringle domain occupies 95–167; the sequence is CPAGEPWVSV…GKVDWGYCDC (73 aa). Disulfide bonds link cysteine 95–cysteine 167, cysteine 111–cysteine 151, cysteine 140–cysteine 165, cysteine 197–cysteine 261, cysteine 210–cysteine 271, cysteine 241–cysteine 251, cysteine 307–cysteine 371, cysteine 320–cysteine 381, cysteine 351–cysteine 361, cysteine 414–cysteine 477, cysteine 427–cysteine 487, cysteine 457–cysteine 467, cysteine 527–cysteine 591, cysteine 540–cysteine 601, cysteine 571–cysteine 581, cysteine 621–cysteine 752, cysteine 663–cysteine 679, cysteine 767–cysteine 833, cysteine 796–cysteine 810, and cysteine 823–cysteine 852. SRCR domains are found at residues 172–273, 282–383, 389–489, and 502–603; these read VRLR…TCSF, IRLV…SCTP, IRLA…ACYP, and VRLM…ICDY. Positions 621–632 are zymogen activation region; the sequence is CGLRLLHRRQKR. The region spanning 633 to 876 is the Peptidase S1 domain; the sequence is IIGGKNSLRG…FVPWIKSVTK (244 aa). The Charge relay system role is filled by histidine 678. Asparagine 685 is a glycosylation site (N-linked (GlcNAc...) asparagine). Aspartate 728 acts as the Charge relay system in catalysis. Serine 827 functions as the Charge relay system in the catalytic mechanism.

It belongs to the peptidase S1 family.

Its subcellular location is the secreted. Its function is as follows. Plays a role in neuronal plasticity and the proteolytic action may subserve structural reorganizations associated with learning and memory operations. The chain is Neurotrypsin (PRSS12) from Pongo pygmaeus (Bornean orangutan).